The sequence spans 117 residues: UPF0344 protein GWCH70_0687 (117 aa).

4 helical membrane-spanning segments follow: residues 2 to 22, 32 to 52, 55 to 75, and 97 to 117; these read THAHITSWLITVILFFIAVSL, IVQMALRLFYIFTVITGGLLL, IASISILYIIKAIVGLWLIGA, and IVAFVLVLFLGFMLPLGFDLF.

It belongs to the UPF0344 family.

The protein resides in the cell membrane. This is UPF0344 protein GWCH70_0687 from Geobacillus sp. (strain WCH70).